Here is a 200-residue protein sequence, read N- to C-terminus: NAD(P)H dehydrogenase (quinone) (200 aa).

In terms of domain architecture, Flavodoxin-like spans 4 to 191 (VLVLYYSSYG…DIARYQGKHV (188 aa)). Residues 10–15 (SSYGHV) and 79–81 (TRF) contribute to the FMN site. Residue Tyr12 coordinates NAD(+). A substrate-binding site is contributed by Trp99. FMN contacts are provided by residues 114 to 120 (STGTQHG) and His135.

This sequence belongs to the WrbA family. Requires FMN as cofactor.

It carries out the reaction a quinone + NADH + H(+) = a quinol + NAD(+). The catalysed reaction is a quinone + NADPH + H(+) = a quinol + NADP(+). This Burkholderia ambifaria (strain MC40-6) protein is NAD(P)H dehydrogenase (quinone).